The primary structure comprises 91 residues: UPF0223 protein SACOL1106 (91 aa).

The protein belongs to the UPF0223 family.

This chain is UPF0223 protein SACOL1106, found in Staphylococcus aureus (strain COL).